A 667-amino-acid chain; its full sequence is Polypeptide N-acetylgalactosaminyltransferase 3 (667 aa).

The Cytoplasmic portion of the chain corresponds to 1–12 (MGLRFQQLKKLW). Residues 13–35 (LLYLFLLFFAFFMFAISINLYVA) traverse the membrane as a helical; Signal-anchor for type II membrane protein segment. At 36-667 (SIQGGDAEMR…WGFIPLPWRM (632 aa)) the chain is on the lumenal side. Residues asparagine 75 and asparagine 129 are each glycosylated (N-linked (GlcNAc...) asparagine). Disulfide bonds link cysteine 140–cysteine 375, cysteine 366–cysteine 446, cysteine 526–cysteine 547, cysteine 572–cysteine 601, and cysteine 626–cysteine 649. The segment at 149-259 (LPSTSVIIVF…RGWLEPLLSR (111 aa)) is catalytic subdomain A. The substrate site is built by aspartate 190 and arginine 220. Residues aspartate 243 and histidine 245 each contribute to the Mn(2+) site. 2 N-linked (GlcNAc...) asparagine glycosylation sites follow: asparagine 279 and asparagine 313. The catalytic subdomain B stretch occupies residues 321 to 383 (PIATPGMAGG…PCSHVGHVFR (63 aa)). Position 352 (tryptophan 352) interacts with substrate. Residue histidine 380 coordinates Mn(2+). Arginine 383 and tyrosine 388 together coordinate substrate. Residue asparagine 433 is glycosylated (N-linked (GlcNAc...) asparagine). Residues 513–661 (EELMALIDLE…KDITQKWGFI (149 aa)) form the Ricin B-type lectin domain. The N-linked (GlcNAc...) asparagine glycan is linked to asparagine 590.

It belongs to the glycosyltransferase 2 family. GalNAc-T subfamily. Mn(2+) is required as a cofactor. As to expression, expressed in developing oocytes and egg chambers. During embryonic stages 9-11, expressed in the primordiums of the foregut, midgut and hindgut. During embryonic stages 12-13, expression is found uniquely in the posterior spiracle. During embryonic stages 14-17, expressed in the pharynx, esophagus and posterior spiracles. Expression observed in the epidermis during embryonic stages 16-17. In third instar larvae, expressed ubiquitously in wing, with increased expression in pleura and notum, eye-antennal, leg and haltere imaginal disks.

The protein resides in the golgi apparatus membrane. The catalysed reaction is L-seryl-[protein] + UDP-N-acetyl-alpha-D-galactosamine = a 3-O-[N-acetyl-alpha-D-galactosaminyl]-L-seryl-[protein] + UDP + H(+). It carries out the reaction L-threonyl-[protein] + UDP-N-acetyl-alpha-D-galactosamine = a 3-O-[N-acetyl-alpha-D-galactosaminyl]-L-threonyl-[protein] + UDP + H(+). Its pathway is protein modification; protein glycosylation. In terms of biological role, catalyzes the initial reaction in O-linked oligosaccharide biosynthesis, the transfer of an N-acetyl-D-galactosamine residue to a serine or threonine residue on the protein receptor. It can both act as a peptide transferase that transfers GalNAc onto unmodified peptide substrates, and as a glycopeptide transferase that requires the prior addition of a GalNAc on a peptide before adding additional GalNAc moieties. Prefers EA2 as substrate. Has weak activity toward Muc5AC-3, -13 and -3/13 substrates. Plays a critical role in the regulation of integrin-mediated cell adhesion during wing development by influencing, via glycosylation, the secretion and localization of the integrin ligand Tig to the basal cell layer interface. Might have a role in protein O-glycosylation in the Golgi and thereby in establishing and/or maintaining a proper secretory apparatus structure. Together with Pgant35A, regulates integrin levels and activity-dependent integrin signaling at the synapse in neurons and muscles. This chain is Polypeptide N-acetylgalactosaminyltransferase 3, found in Drosophila melanogaster (Fruit fly).